The chain runs to 701 residues: Nucleolar transcription factor 1-B (701 aa).

Positions 1-21 (MNGAAGGDTQGKMTAPKDQDQ) are disordered. 5 consecutive DNA-binding regions (HMG box) follow at residues 112-180 (PKKP…AKFR), 196-264 (PEKP…REYM), 298-362 (TKPP…MRFL), 422-489 (PETP…SDMR), and 508-574 (KKAP…DTWM). The tract at residues 382 to 426 (MKRKRTNTPASKMATEDAAKVKSRSGQADKKKAAEERAKLPETPK) is disordered. Positions 408–426 (QADKKKAAEERAKLPETPK) are enriched in basic and acidic residues. The disordered stretch occupies residues 584 to 701 (AYKEQNTNKR…SADSSDSDSN (118 aa)). Residues 597–612 (TKIQAPSSKSKLVIQS) show a composition bias toward polar residues. Positions 615-682 (DDDEDDEDDE…DNEEDDDDNE (68 aa)) are enriched in acidic residues. A compositionally biased stretch (low complexity) spans 683-695 (SGSSSSSSSSADS).

In terms of assembly, XUBF consists of 2 polypeptides of 82 and 85 kDa, encoded by the same or closely related genes.

The protein resides in the nucleus. Functionally, UBF recognizes the ribosomal RNA gene promotor and activates transcription mediated by RNA polymerase I through cooperative interactions with the species-specific factor SL1. It binds specifically to the upstream control element. The sequence is that of Nucleolar transcription factor 1-B (ubtf-b) from Xenopus laevis (African clawed frog).